Consider the following 527-residue polypeptide: Peptide chain release factor 3 (527 aa).

Residues 11 to 278 (AKRRTFAIIS…GFVEWAPPPL (268 aa)) enclose the tr-type G domain. GTP contacts are provided by residues 20–27 (SHPDAGKT), 87–91 (DTPGH), and 141–144 (NKMD).

It belongs to the TRAFAC class translation factor GTPase superfamily. Classic translation factor GTPase family. PrfC subfamily.

It localises to the cytoplasm. In terms of biological role, increases the formation of ribosomal termination complexes and stimulates activities of RF-1 and RF-2. It binds guanine nucleotides and has strong preference for UGA stop codons. It may interact directly with the ribosome. The stimulation of RF-1 and RF-2 is significantly reduced by GTP and GDP, but not by GMP. The protein is Peptide chain release factor 3 of Saccharophagus degradans (strain 2-40 / ATCC 43961 / DSM 17024).